A 433-amino-acid polypeptide reads, in one-letter code: Phosphoribosylamine--glycine ligase (433 aa).

The ATP-grasp domain maps to 111–317 (EFMARNNIKG…FVDICEAIVD (207 aa)). 138 to 194 (EDNPDVVVKPAGLTGGKGVKVMGEHMHTLEEAREYVKSVLEHDRVVIEERLKGEEVT) serves as a coordination point for ATP. Mg(2+) is bound by residues Gln275, Glu287, and Asn289. Mn(2+) contacts are provided by Gln275, Glu287, and Asn289.

Belongs to the GARS family. It depends on Mg(2+) as a cofactor. Mn(2+) serves as cofactor.

The catalysed reaction is 5-phospho-beta-D-ribosylamine + glycine + ATP = N(1)-(5-phospho-beta-D-ribosyl)glycinamide + ADP + phosphate + H(+). Its pathway is purine metabolism; IMP biosynthesis via de novo pathway; N(1)-(5-phospho-D-ribosyl)glycinamide from 5-phospho-alpha-D-ribose 1-diphosphate: step 2/2. This Methanocella arvoryzae (strain DSM 22066 / NBRC 105507 / MRE50) protein is Phosphoribosylamine--glycine ligase.